Reading from the N-terminus, the 49-residue chain is U3-plectoxin-Pt1a (49 aa).

Intrachain disulfides connect Cys-2-Cys-16, Cys-9-Cys-30, Cys-15-Cys-41, Cys-32-Cys-39, and Cys-45-Cys-49.

As to expression, expressed by the venom gland.

It localises to the secreted. Its function is as follows. Potent toxin that may paralyze and/or kill insect pests such as H.virescens (lepidoptera), S.exigua (beet armyworm) and M.sexta (tobacco hornworm). The sequence is that of U3-plectoxin-Pt1a from Plectreurys tristis (Spider).